A 142-amino-acid polypeptide reads, in one-letter code: Large ribosomal subunit protein uL11 (142 aa).

This sequence belongs to the universal ribosomal protein uL11 family. Part of the ribosomal stalk of the 50S ribosomal subunit. Interacts with L10 and the large rRNA to form the base of the stalk. L10 forms an elongated spine to which L12 dimers bind in a sequential fashion forming a multimeric L10(L12)X complex. In terms of processing, one or more lysine residues are methylated.

Functionally, forms part of the ribosomal stalk which helps the ribosome interact with GTP-bound translation factors. The sequence is that of Large ribosomal subunit protein uL11 from Rhodopseudomonas palustris (strain HaA2).